Consider the following 363-residue polypeptide: Neutral protease 2 homolog MEP7 (363 aa).

The signal sequence occupies residues 1–19; the sequence is MLLCSMVAALAALATPAFS. Residues 20–181 constitute a propeptide that is removed on maturation; the sequence is CALPHLDLPE…ARAIQPLDRR (162 aa). 2 disulfides stabilise this stretch: Cys187–Cys259 and Cys266–Cys284. Residue His308 coordinates Zn(2+). Glu309 is a catalytic residue. Residues His312 and Asp323 each coordinate Zn(2+).

This sequence belongs to the peptidase M35 family. Zn(2+) serves as cofactor.

The protein resides in the secreted. It carries out the reaction Preferential cleavage of bonds with hydrophobic residues in P1'. Also 3-Asn-|-Gln-4 and 8-Gly-|-Ser-9 bonds in insulin B chain.. Functionally, secreted metalloproteinase that allows assimilation of proteinaceous substrates. Shows high activities on basic nuclear substrates such as histone and protamine. May be involved in virulence. The polypeptide is Neutral protease 2 homolog MEP7 (MEP7) (Coccidioides posadasii (strain C735) (Valley fever fungus)).